Here is a 411-residue protein sequence, read N- to C-terminus: Putative glycosyltransferase SCO3672 (411 aa).

The next 10 membrane-spanning stretches (helical) occupy residues 7–27 (IAAA…LAAL), 45–65 (PVPL…AWAG), 70–90 (VVPL…VGAL), 120–140 (ETGP…TGAF), 148–168 (GVVG…AAVE), 169–189 (LMDG…GFLL), 197–217 (IALG…AAVL), 227–247 (GAGV…LVLL), 277–297 (GVVV…VLAH), and 301–321 (VGGQ…LGLL).

It belongs to the glycosyltransferase 4 family.

Its subcellular location is the cell membrane. The polypeptide is Putative glycosyltransferase SCO3672 (Streptomyces coelicolor (strain ATCC BAA-471 / A3(2) / M145)).